The sequence spans 450 residues: UDP-N-acetylmuramoylalanine--D-glutamate ligase (450 aa).

Residue 119 to 125 (GSNGKTT) coordinates ATP.

Belongs to the MurCDEF family.

The protein resides in the cytoplasm. The catalysed reaction is UDP-N-acetyl-alpha-D-muramoyl-L-alanine + D-glutamate + ATP = UDP-N-acetyl-alpha-D-muramoyl-L-alanyl-D-glutamate + ADP + phosphate + H(+). Its pathway is cell wall biogenesis; peptidoglycan biosynthesis. Cell wall formation. Catalyzes the addition of glutamate to the nucleotide precursor UDP-N-acetylmuramoyl-L-alanine (UMA). The protein is UDP-N-acetylmuramoylalanine--D-glutamate ligase of Streptococcus pneumoniae serotype 4 (strain ATCC BAA-334 / TIGR4).